The primary structure comprises 859 residues: Nitrate reductase [NADPH] (859 aa).

Cys137 provides a ligand contact to Mo-molybdopterin. The region spanning 502–578 (DVVIKYSEFE…LPSMHLGRLE (77 aa)) is the Cytochrome b5 heme-binding domain. His538 and His561 together coordinate heme. The FAD-binding FR-type domain occupies 602 to 713 (RKWHKITLAE…KGPVGEFEYV (112 aa)). FAD-binding positions include 655 to 658 (RAYT), 672 to 676 (LIKVY), Phe677, 687 to 689 (IMT), Ser737, and Thr740. 829 to 838 (MLLVCGPPGM) is a binding site for NADP(+).

Belongs to the nitrate reductase family. As to quaternary structure, homodimer. Requires FAD as cofactor. Heme is required as a cofactor. Mo-molybdopterin serves as cofactor.

It catalyses the reaction nitrite + NADP(+) + H2O = nitrate + NADPH + H(+). Nitrate reductase is a key enzyme involved in the first step of nitrate assimilation in plants, fungi and bacteria. The sequence is that of Nitrate reductase [NADPH] (YNR1) from Pichia angusta (Yeast).